We begin with the raw amino-acid sequence, 199 residues long: Adenylyl-sulfate kinase (199 aa).

Residues 1-22 (MSESNHITWHDSEVTKKQRQHK) form a disordered region. Position 34–41 (34–41 (GLSGSGKS)) interacts with ATP. S108 functions as the Phosphoserine intermediate in the catalytic mechanism.

Belongs to the APS kinase family.

It carries out the reaction adenosine 5'-phosphosulfate + ATP = 3'-phosphoadenylyl sulfate + ADP + H(+). It participates in sulfur metabolism; hydrogen sulfide biosynthesis; sulfite from sulfate: step 2/3. Its function is as follows. Catalyzes the synthesis of activated sulfate. This is Adenylyl-sulfate kinase from Staphylococcus epidermidis (strain ATCC 12228 / FDA PCI 1200).